A 215-amino-acid chain; its full sequence is Cytochrome b6 (215 aa).

A helical transmembrane segment spans residues 32–52 (IFYCLGGITLTCFLVQVATGF). A heme c-binding site is contributed by Cys35. His86 and His100 together coordinate heme b. 3 helical membrane passes run 90–110 (ASMM…TGGF), 116–136 (LTWV…VTGY), and 186–206 (LHTF…FPMI). Residues His187 and His202 each contribute to the heme b site.

The protein belongs to the cytochrome b family. PetB subfamily. As to quaternary structure, the 4 large subunits of the cytochrome b6-f complex are cytochrome b6, subunit IV (17 kDa polypeptide, PetD), cytochrome f and the Rieske protein, while the 4 small subunits are PetG, PetL, PetM and PetN. The complex functions as a dimer. Requires heme b as cofactor. It depends on heme c as a cofactor.

It is found in the plastid. The protein resides in the chloroplast thylakoid membrane. Component of the cytochrome b6-f complex, which mediates electron transfer between photosystem II (PSII) and photosystem I (PSI), cyclic electron flow around PSI, and state transitions. The sequence is that of Cytochrome b6 from Helianthus annuus (Common sunflower).